We begin with the raw amino-acid sequence, 212 residues long: Probable GTP-binding protein EngB (212 aa).

An EngB-type G domain is found at 38–210; the sequence is SLPEIAFVGK…KASLAKCIKP (173 aa). GTP-binding positions include 46 to 53, 73 to 77, 91 to 94, 158 to 161, and 189 to 191; these read GKSNVGKS, GRTRQ, DLPG, TKSD, and VSN. Positions 53 and 75 each coordinate Mg(2+).

This sequence belongs to the TRAFAC class TrmE-Era-EngA-EngB-Septin-like GTPase superfamily. EngB GTPase family. The cofactor is Mg(2+).

In terms of biological role, necessary for normal cell division and for the maintenance of normal septation. The chain is Probable GTP-binding protein EngB from Rickettsia peacockii (strain Rustic).